Reading from the N-terminus, the 286-residue chain is ATP synthase gamma chain (286 aa).

This sequence belongs to the ATPase gamma chain family. In terms of assembly, F-type ATPases have 2 components, CF(1) - the catalytic core - and CF(0) - the membrane proton channel. CF(1) has five subunits: alpha(3), beta(3), gamma(1), delta(1), epsilon(1). CF(0) has three main subunits: a, b and c.

It is found in the cell inner membrane. Its function is as follows. Produces ATP from ADP in the presence of a proton gradient across the membrane. The gamma chain is believed to be important in regulating ATPase activity and the flow of protons through the CF(0) complex. The chain is ATP synthase gamma chain from Shewanella halifaxensis (strain HAW-EB4).